The following is a 571-amino-acid chain: Proline--tRNA ligase (571 aa).

Belongs to the class-II aminoacyl-tRNA synthetase family. ProS type 1 subfamily. Homodimer.

The protein localises to the cytoplasm. It catalyses the reaction tRNA(Pro) + L-proline + ATP = L-prolyl-tRNA(Pro) + AMP + diphosphate. Its function is as follows. Catalyzes the attachment of proline to tRNA(Pro) in a two-step reaction: proline is first activated by ATP to form Pro-AMP and then transferred to the acceptor end of tRNA(Pro). As ProRS can inadvertently accommodate and process non-cognate amino acids such as alanine and cysteine, to avoid such errors it has two additional distinct editing activities against alanine. One activity is designated as 'pretransfer' editing and involves the tRNA(Pro)-independent hydrolysis of activated Ala-AMP. The other activity is designated 'posttransfer' editing and involves deacylation of mischarged Ala-tRNA(Pro). The misacylated Cys-tRNA(Pro) is not edited by ProRS. This chain is Proline--tRNA ligase, found in Shewanella sp. (strain W3-18-1).